A 1353-amino-acid polypeptide reads, in one-letter code: Xanthine dehydrogenase (1353 aa).

The 2Fe-2S ferredoxin-type domain occupies 17–104 (STLIFFVNGK…GSAVTTVEGI (88 aa)). Residues Cys56, Cys61, Cys64, Cys86, Cys126, Cys129, Cys161, and Cys163 each coordinate [2Fe-2S] cluster. Residues 245–434 (YKGERATWYR…VGLYFPKTLE (190 aa)) enclose the FAD-binding PCMH-type domain. FAD is bound by residues 273–280 (LVVGNTEI), Phe353, 363–367 (SLGGN), Asp376, Leu424, and Lys442. Residues Gln790 and Phe821 each coordinate Mo-molybdopterin. Positions 825 and 903 each coordinate substrate. Residue Arg935 coordinates Mo-molybdopterin. Residue Phe937 participates in substrate binding. Ala1102 serves as a coordination point for Mo-molybdopterin. The Proton acceptor role is filled by Glu1285.

This sequence belongs to the xanthine dehydrogenase family. Homodimer. FAD serves as cofactor. Requires Mo-molybdopterin as cofactor. [2Fe-2S] cluster is required as a cofactor.

The protein localises to the peroxisome. It catalyses the reaction xanthine + NAD(+) + H2O = urate + NADH + H(+). It carries out the reaction hypoxanthine + NAD(+) + H2O = xanthine + NADH + H(+). Its function is as follows. Key enzyme in purine degradation. Catalyzes the oxidation of hypoxanthine to xanthine. Catalyzes the oxidation of xanthine to uric acid. The protein is Xanthine dehydrogenase (XDH) of Calliphora vicina (Blue blowfly).